The chain runs to 790 residues: DNA topoisomerase 1 (790 aa).

3 stretches are compositionally biased toward polar residues: residues 1 to 18 (MKSNPGITVIKQNASNVM), 44 to 54 (KLSSGALNGNS), and 61 to 70 (SNLSCPSPYT). The tract at residues 1–196 (MKSNPGITVI…KKRPDVSASV (196 aa)) is disordered. The span at 158–167 (QEEAAADDDP) shows a compositional bias: acidic residues. A compositionally biased stretch (polar residues) spans 168-181 (SISNRNKKSTTPAS). Interaction with DNA stretches follow at residues 426 to 427 (KY), 490 to 495 (RAGNEK), and 581 to 583 (TAK). One can recognise a Topo IB-type catalytic domain in the interval 433–790 (SSSLKGKVTR…AMDVVLIFRF (358 aa)). The active-site O-(3'-phospho-DNA)-tyrosine intermediate is the Tyr749.

The protein belongs to the type IB topoisomerase family.

It localises to the nucleus. The enzyme catalyses ATP-independent breakage of single-stranded DNA, followed by passage and rejoining.. In terms of biological role, releases the supercoiling and torsional tension of DNA introduced during the DNA replication and transcription by transiently cleaving and rejoining one strand of the DNA duplex. Introduces a single-strand break via transesterification at a target site in duplex DNA. The scissile phosphodiester is attacked by the catalytic tyrosine of the enzyme, resulting in the formation of a DNA-(3'-phosphotyrosyl)-enzyme intermediate and the expulsion of a 5'-OH DNA strand. The free DNA strand then rotates around the intact phosphodiester bond on the opposing strand, thus removing DNA supercoils. Finally, in the religation step, the DNA 5'-OH attacks the covalent intermediate to expel the active-site tyrosine and restore the DNA phosphodiester backbone. This Daucus carota (Wild carrot) protein is DNA topoisomerase 1 (TOP1).